We begin with the raw amino-acid sequence, 284 residues long: NAD kinase (284 aa).

The active-site Proton acceptor is aspartate 60. Residues 60-61, 134-135, lysine 145, arginine 162, aspartate 164, and glutamine 235 each bind NAD(+); these read DG and ND.

This sequence belongs to the NAD kinase family. The cofactor is a divalent metal cation.

The protein resides in the cytoplasm. It catalyses the reaction NAD(+) + ATP = ADP + NADP(+) + H(+). In terms of biological role, involved in the regulation of the intracellular balance of NAD and NADP, and is a key enzyme in the biosynthesis of NADP. Catalyzes specifically the phosphorylation on 2'-hydroxyl of the adenosine moiety of NAD to yield NADP. This Treponema denticola (strain ATCC 35405 / DSM 14222 / CIP 103919 / JCM 8153 / KCTC 15104) protein is NAD kinase.